Here is a 213-residue protein sequence, read N- to C-terminus: Pyrrolidone-carboxylate peptidase (213 aa).

Catalysis depends on residues glutamate 80, cysteine 143, and histidine 166.

Belongs to the peptidase C15 family. In terms of assembly, homotetramer.

Its subcellular location is the cytoplasm. The enzyme catalyses Release of an N-terminal pyroglutamyl group from a polypeptide, the second amino acid generally not being Pro.. Functionally, removes 5-oxoproline from various penultimate amino acid residues except L-proline. The sequence is that of Pyrrolidone-carboxylate peptidase from Clavibacter michiganensis subsp. michiganensis (strain NCPPB 382).